Consider the following 138-residue polypeptide: Protein NrdI (138 aa).

Belongs to the NrdI family.

Probably involved in ribonucleotide reductase function. This Beutenbergia cavernae (strain ATCC BAA-8 / DSM 12333 / CCUG 43141 / JCM 11478 / NBRC 16432 / NCIMB 13614 / HKI 0122) protein is Protein NrdI.